We begin with the raw amino-acid sequence, 708 residues long: Kin of IRRE-like protein 2 (708 aa).

Residues 1-20 form the signal peptide; it reads MLRMRVPALLVLLFCFRGRA. The Extracellular segment spans residues 21–510; sequence GPSPHFLQQP…GRRDLLPTVR (490 aa). 5 consecutive Ig-like C2-type domains span residues 24 to 118, 123 to 222, 227 to 307, 312 to 394, and 398 to 501; these read PHFL…AQLH, PEAP…ITLS, PEVT…TALD, PILQ…ARLT, and PPVV…ASLG. The cysteines at positions 45 and 103 are disulfide-linked. Asparagine 143 carries N-linked (GlcNAc...) asparagine glycosylation. 2 cysteine pairs are disulfide-bonded: cysteine 146-cysteine 204 and cysteine 248-cysteine 291. Positions 149–151 match the Cell attachment site motif; it reads RGD. An N-linked (GlcNAc...) asparagine glycan is attached at asparagine 301. 2 disulfide bridges follow: cysteine 333/cysteine 375 and cysteine 419/cysteine 485. An N-linked (GlcNAc...) asparagine glycan is attached at asparagine 484. The chain crosses the membrane as a helical span at residues 511-531; the sequence is IVAGVAAATTTLLMVITGVAL. At 532–708 the chain is on the cytoplasmic side; the sequence is CCWRHSKASA…PSHPRLQTHV (177 aa). Residues 545 to 601 form a disordered region; the sequence is EQKNLMRIPGSSDGSSSRGPEEEETGSREDRGPIVHTDHSDLVLEEEGTLETKDPTN. Residues 553–562 show a composition bias toward low complexity; that stretch reads PGSSDGSSSR. The span at 569-586 shows a compositional bias: basic and acidic residues; that stretch reads TGSREDRGPIVHTDHSDL. Serine 571 carries the phosphoserine modification. 3 positions are modified to phosphotyrosine: tyrosine 603, tyrosine 604, and tyrosine 661. The tract at residues 684-708 is disordered; sequence LAPGTPPFPYAAFPTPSHPRLQTHV.

It belongs to the immunoglobulin superfamily. Homodimer. Interacts with NPHS2/podocin (via the C-terminus). Interacts with NPHS1 (via the Ig-like domains). Interacts with FYN. In terms of processing, N-glycosylated. Post-translationally, the extracellular domain is cleaved leading to the generation of a soluble fragment and a membrane-bound C-terminal fragment, which is further cleaved by gamma-secretase. As to expression, highly expressed in beta-cells of the pancreatic islets.

It is found in the cell membrane. Functionally, may regulate basal insulin secretion. In Homo sapiens (Human), this protein is Kin of IRRE-like protein 2 (KIRREL2).